We begin with the raw amino-acid sequence, 288 residues long: Male determiner protein Nix (288 aa).

RRM domains lie at 19–94 (YCIY…LPLS), 108–179 (IVVY…KVER), and 205–282 (RSIG…FVPE).

Functionally, male determiner protein (M-factor) that controls male somatic sexual differentiation. Acts as a dominant factor that regulates the mRNA splicing of doublesex (dsx) or fruitless (fru) transcripts and promotes expression of male splice forms of dsx and fru. This chain is Male determiner protein Nix, found in Aedes aegypti (Yellowfever mosquito).